A 312-amino-acid polypeptide reads, in one-letter code: Glyoxylate/hydroxypyruvate reductase A (312 aa).

Arg227 is an active-site residue. Catalysis depends on His275, which acts as the Proton donor.

It belongs to the D-isomer specific 2-hydroxyacid dehydrogenase family. GhrA subfamily.

The protein localises to the cytoplasm. It carries out the reaction glycolate + NADP(+) = glyoxylate + NADPH + H(+). The enzyme catalyses (R)-glycerate + NAD(+) = 3-hydroxypyruvate + NADH + H(+). It catalyses the reaction (R)-glycerate + NADP(+) = 3-hydroxypyruvate + NADPH + H(+). Functionally, catalyzes the NADPH-dependent reduction of glyoxylate and hydroxypyruvate into glycolate and glycerate, respectively. In Shigella boydii serotype 18 (strain CDC 3083-94 / BS512), this protein is Glyoxylate/hydroxypyruvate reductase A.